We begin with the raw amino-acid sequence, 446 residues long: Gasdermin-A (446 aa).

Residues 1-252 (MTMFENVTRA…FILIQASDVG (252 aa)) form a triggers pyroptosis region. Position 9 to 13 (9 to 13 (RALAR)) interacts with a cardiolipin. 4 beta stranded membrane-spanning segments follow: residues 78 to 95 (NFSFKNMLDARVEGDVDV), 99 to 120 (VKVKGTAGLSRSSTLEVQTLSV), 164 to 180 (VTLERAGKAEGCFSLPF), and 184 to 198 (LGLQGSVNHKEAVTI).

It belongs to the gasdermin family. Homooligomer; homooligomeric ring-shaped pore complex containing 18-36 subunits when inserted in the membrane. In terms of processing, cleavage by bacterial SpeB relieves autoinhibition by releasing the N-terminal moiety (Gasdermin-A, N-terminal) that initiates pyroptosis. Palmitoylated. Expressed predominantly in the gastrointestinal (GI) tract and in the skin at a lower level. In the GI tract, the expression is highly restricted to the esophagus and forestomach.

It is found in the cytoplasm. Its subcellular location is the perinuclear region. The protein resides in the cytosol. The protein localises to the cell membrane. The full-length protein before cleavage is inactive: intramolecular interactions between N- and C-terminal domains mediate autoinhibition in the absence of activation signal. The intrinsic pyroptosis-inducing activity is carried by the released N-terminal moiety (Gasdermin-A, N-terminal) following cleavage by bacterial effector protein SpeB. This form constitutes the precursor of the pore-forming protein and acts as a sensor of bacterial infection: upon infection, specifically cleaved by bacterial effector protein SpeB in epithelial cells, releasing the N-terminal moiety (Gasdermin-A, N-terminal) that binds to membranes and forms pores, triggering pyroptosis. In terms of biological role, pore-forming protein that causes membrane permeabilization and pyroptosis. Released upon cleavage by bacterial effector protein SpeB, and binds to membrane inner leaflet lipids. Homooligomerizes within the membrane and forms pores of 10-15 nanometers (nm) of inner diameter, triggering pyroptosis. Pyroptosis triggers the elimination of the infected skin cell, depriving the pathogen of its protective niche, while inducing an inflammatory response. This ultimately prevents bacterial penetration of the epithelial barrier and a subsequent systemic dissemination of the pathogen. Binds to cardiolipin and other acidic phospholipids, such as phosphatidylserine, which mediate its targeting to the inner leaflet membrane. In Mus musculus (Mouse), this protein is Gasdermin-A (Gsdma).